We begin with the raw amino-acid sequence, 62 residues long: Large ribosomal subunit protein eL37 (62 aa).

Cys-20, Cys-23, Cys-35, and Cys-38 together coordinate Zn(2+). Residues 20–38 (CRRCGRRAYHVRKGYCAAC) form a C4-type zinc finger.

The protein belongs to the eukaryotic ribosomal protein eL37 family. It depends on Zn(2+) as a cofactor.

Functionally, binds to the 23S rRNA. The chain is Large ribosomal subunit protein eL37 from Methanopyrus kandleri (strain AV19 / DSM 6324 / JCM 9639 / NBRC 100938).